The following is a 1423-amino-acid chain: Protein Shroom2 (1423 aa).

The tract at residues methionine 1–alanine 101 is disordered. The segment covering serine 8–tryptophan 27 has biased composition (low complexity). Polar residues-rich tracts occupy residues glutamate 28–isoleucine 69 and glycine 83–aspartate 93. Phosphoserine is present on serine 103. The disordered stretch occupies residues alanine 116–phenylalanine 171. Residues proline 119 to aspartate 130 show a composition bias toward polar residues. Serine 185, serine 197, and serine 291 each carry phosphoserine. 5 disordered regions span residues serine 300–lysine 357, threonine 586–arginine 630, glutamate 758–glutamine 855, proline 872–aspartate 930, and valine 1045–threonine 1085. One can recognise an ASD1 domain in the interval leucine 575–glycine 677. Residues serine 761 to glutamate 771 are compositionally biased toward basic and acidic residues. 4 positions are modified to phosphoserine: serine 806, serine 830, serine 831, and serine 833. Phosphothreonine is present on threonine 834. The segment covering proline 872 to serine 885 has biased composition (low complexity). Positions aspartate 891 to phenylalanine 923 are enriched in polar residues. Phosphoserine occurs at positions 918 and 920. Residues proline 1054–proline 1065 are compositionally biased toward pro residues. Phosphoserine is present on residues serine 1072 and serine 1329. Residues glutamate 1092–glutamine 1418 enclose the ASD2 domain.

The protein belongs to the shroom family. Interacts with F-actin.

Its subcellular location is the apical cell membrane. It is found in the cell junction. The protein resides in the tight junction. It localises to the cytoplasm. The protein localises to the cytoskeleton. In terms of biological role, may be involved in endothelial cell morphology changes during cell spreading. In the retinal pigment epithelium, may regulate the biogenesis of melanosomes and promote their association with the apical cell surface by inducing gamma-tubulin redistribution. The polypeptide is Protein Shroom2 (Shroom2) (Rattus norvegicus (Rat)).